Consider the following 77-residue polypeptide: Adipokinetic prohormone type 3 (77 aa).

The first 22 residues, 1 to 22, serve as a signal peptide directing secretion; it reads MQVRAVLVLAVVALVAVATSRA. Q23 carries the post-translational modification Pyrrolidone carboxylic acid. The residue at position 30 (W30) is a Tryptophan amide.

Belongs to the AKH/HRTH/RPCH family.

The protein localises to the secreted. In terms of biological role, this hormone, released from cells in the corpora cardiaca, causes release of diglycerides from the fat body and stimulation of muscles to use these diglycerides as an energy source during energy-demanding processes. In Locusta migratoria (Migratory locust), this protein is Adipokinetic prohormone type 3.